Here is a 795-residue protein sequence, read N- to C-terminus: Phenylalanine--tRNA ligase beta subunit (795 aa).

The tRNA-binding domain maps to 39–148; it reads AGAFHGVVVG…ADAPLGTDIR (110 aa). Residues 401 to 476 form the B5 domain; sequence PARATIALRR…RVYGYNNIPN (76 aa). 4 residues coordinate Mg(2+): Asp454, Asp460, Glu463, and Glu464. Residues 701-794 enclose the FDX-ACB domain; the sequence is SRFPANRRDI…LKQRFQASLR (94 aa).

The protein belongs to the phenylalanyl-tRNA synthetase beta subunit family. Type 1 subfamily. In terms of assembly, tetramer of two alpha and two beta subunits. It depends on Mg(2+) as a cofactor.

It is found in the cytoplasm. It carries out the reaction tRNA(Phe) + L-phenylalanine + ATP = L-phenylalanyl-tRNA(Phe) + AMP + diphosphate + H(+). The chain is Phenylalanine--tRNA ligase beta subunit (pheT) from Dickeya dadantii (strain 3937) (Erwinia chrysanthemi (strain 3937)).